A 660-amino-acid chain; its full sequence is Bifunctional polymyxin resistance protein ArnA (660 aa).

The interval 1-304 is formyltransferase ArnAFT; the sequence is MKAVVFAYHD…TLGLVEGSRL (304 aa). His-104 serves as the catalytic Proton donor; for formyltransferase activity. Residues Arg-114 and 136-140 contribute to the (6R)-10-formyltetrahydrofolate site; that span reads VAKAD. Residues 314 to 660 are dehydrogenase ArnADH; it reads RRTRVLILGV…RTVDIVEKSS (347 aa). NAD(+)-binding positions include Asp-347 and 368 to 369; that span reads DI. UDP-alpha-D-glucuronate-binding positions include Ala-393, Tyr-398, and 432–433; that span reads TS. The active-site Proton acceptor; for decarboxylase activity is the Glu-434. Residues Arg-460, Asn-492, 526–535, and Tyr-613 each bind UDP-alpha-D-glucuronate; that span reads KLIDGGKQKR. The Proton donor; for decarboxylase activity role is filled by Arg-619.

In the N-terminal section; belongs to the Fmt family. UDP-L-Ara4N formyltransferase subfamily. The protein in the C-terminal section; belongs to the NAD(P)-dependent epimerase/dehydratase family. UDP-glucuronic acid decarboxylase subfamily. In terms of assembly, homohexamer, formed by a dimer of trimers.

The enzyme catalyses UDP-alpha-D-glucuronate + NAD(+) = UDP-beta-L-threo-pentopyranos-4-ulose + CO2 + NADH. It carries out the reaction UDP-4-amino-4-deoxy-beta-L-arabinose + (6R)-10-formyltetrahydrofolate = UDP-4-deoxy-4-formamido-beta-L-arabinose + (6S)-5,6,7,8-tetrahydrofolate + H(+). The protein operates within nucleotide-sugar biosynthesis; UDP-4-deoxy-4-formamido-beta-L-arabinose biosynthesis; UDP-4-deoxy-4-formamido-beta-L-arabinose from UDP-alpha-D-glucuronate: step 1/3. It participates in nucleotide-sugar biosynthesis; UDP-4-deoxy-4-formamido-beta-L-arabinose biosynthesis; UDP-4-deoxy-4-formamido-beta-L-arabinose from UDP-alpha-D-glucuronate: step 3/3. Its pathway is bacterial outer membrane biogenesis; lipopolysaccharide biosynthesis. In terms of biological role, bifunctional enzyme that catalyzes the oxidative decarboxylation of UDP-glucuronic acid (UDP-GlcUA) to UDP-4-keto-arabinose (UDP-Ara4O) and the addition of a formyl group to UDP-4-amino-4-deoxy-L-arabinose (UDP-L-Ara4N) to form UDP-L-4-formamido-arabinose (UDP-L-Ara4FN). The modified arabinose is attached to lipid A and is required for resistance to polymyxin and cationic antimicrobial peptides. This is Bifunctional polymyxin resistance protein ArnA from Escherichia fergusonii (strain ATCC 35469 / DSM 13698 / CCUG 18766 / IAM 14443 / JCM 21226 / LMG 7866 / NBRC 102419 / NCTC 12128 / CDC 0568-73).